Here is a 564-residue protein sequence, read N- to C-terminus: NAC domain-containing protein 16 (564 aa).

Residues Ser-16–Lys-166 form the NAC domain. A DNA-binding region spans residues Val-115–Lys-172. The chain crosses the membrane as a helical span at residues Phe-535–Val-555.

As to expression, expressed in roots, rosette leaves, shoot apex, stems and flowers.

The protein localises to the membrane. Its subcellular location is the nucleus. In terms of biological role, transcriptional activator activated by proteolytic cleavage through regulated intramembrane proteolysis (RIP). Transcriptional activator that promotes leaf senescence by up-regulating senescence-associated genes in response to developmental and stress-induced senescence signals. Functions in salt and oxidative stress-responsive signaling pathways. Binds to the promoter of NAC029/NAP and NAC059/ORS1 genes. The sequence is that of NAC domain-containing protein 16 from Arabidopsis thaliana (Mouse-ear cress).